A 385-amino-acid chain; its full sequence is tRNA-specific 2-thiouridylase MnmA (385 aa).

ATP contacts are provided by residues 27–34 (AMSGGVDS) and Leu-53. The Nucleophile role is filled by Cys-121. Residues Cys-121 and Cys-217 are joined by a disulfide bond. An ATP-binding site is contributed by Gly-145. Residues 167-169 (KDQ) are interaction with tRNA. The active-site Cysteine persulfide intermediate is the Cys-217.

Belongs to the MnmA/TRMU family.

It is found in the cytoplasm. It carries out the reaction S-sulfanyl-L-cysteinyl-[protein] + uridine(34) in tRNA + AH2 + ATP = 2-thiouridine(34) in tRNA + L-cysteinyl-[protein] + A + AMP + diphosphate + H(+). Functionally, catalyzes the 2-thiolation of uridine at the wobble position (U34) of tRNA, leading to the formation of s(2)U34. The sequence is that of tRNA-specific 2-thiouridylase MnmA from Sorangium cellulosum (strain So ce56) (Polyangium cellulosum (strain So ce56)).